Consider the following 99-residue polypeptide: Ragulator complex protein LAMTOR4 (99 aa).

M1 bears the N-acetylmethionine mark. T2 is subject to N-acetylthreonine; in Ragulator complex protein LAMTOR4, N-terminally processed. At S67 the chain carries Phosphoserine; by PKA.

This sequence belongs to the LAMTOR4 family. In terms of assembly, part of the Ragulator complex composed of LAMTOR1, LAMTOR2, LAMTOR3, LAMTOR4 and LAMTOR5. LAMTOR4 and LAMTOR5 form a heterodimer that interacts, through LAMTOR1, with a LAMTOR2, LAMTOR3 heterodimer. The Ragulator complex interacts with both the mTORC1 complex and heterodimers constituted of the Rag GTPases RagA/RRAGA, RagB/RRAGB, RagC/RRAGC and RagD/RRAGD; regulated by amino acid availability. The Ragulator complex interacts with SLC38A9; the probable amino acid sensor. Component of the lysosomal folliculin complex (LFC), composed of FLCN, FNIP1 (or FNIP2), RagA/RRAGA or RagB/RRAGB GDP-bound, RagC/RRAGC or RagD/RRAGD GTP-bound, and Ragulator. Post-translationally, phosphorylation at Ser-67 by PKA inhibits Ragulator complex assembly.

The protein localises to the lysosome. As part of the Ragulator complex it is involved in amino acid sensing and activation of mTORC1, a signaling complex promoting cell growth in response to growth factors, energy levels, and amino acids. Activated by amino acids through a mechanism involving the lysosomal V-ATPase, the Ragulator plays a dual role for the small GTPases Rag (RagA/RRAGA, RagB/RRAGB, RagC/RRAGC and/or RagD/RRAGD): it (1) acts as a guanine nucleotide exchange factor (GEF), activating the small GTPases Rag and (2) mediates recruitment of Rag GTPases to the lysosome membrane. Activated Ragulator and Rag GTPases function as a scaffold recruiting mTORC1 to lysosomes where it is in turn activated. In Homo sapiens (Human), this protein is Ragulator complex protein LAMTOR4.